The primary structure comprises 391 residues: Protein kinase ORF14 (391 aa).

The 283-residue stretch at 109 to 391 folds into the Protein kinase domain; it reads VPLRHTRGNI…ETLVDEFSKI (283 aa). Position 134 (Lys-134) interacts with ATP. Asp-235 acts as the Proton acceptor in catalysis.

Belongs to the protein kinase superfamily. Ser/Thr protein kinase family.

It catalyses the reaction L-seryl-[protein] + ATP = O-phospho-L-seryl-[protein] + ADP + H(+). The enzyme catalyses L-threonyl-[protein] + ATP = O-phospho-L-threonyl-[protein] + ADP + H(+). The chain is Protein kinase ORF14 (ORF14) from Ictalurid herpesvirus 1 (strain Auburn) (IcHV-1).